The following is a 184-amino-acid chain: Probable gluconokinase (184 aa).

Residue 11–18 (GVSGSGKS) coordinates ATP.

It belongs to the gluconokinase GntK/GntV family.

The catalysed reaction is D-gluconate + ATP = 6-phospho-D-gluconate + ADP + H(+). The protein operates within carbohydrate acid metabolism; D-gluconate degradation. The sequence is that of Probable gluconokinase (Idnk) from Mus musculus (Mouse).